The chain runs to 348 residues: tRNA pseudouridine synthase D (348 aa).

Phenylalanine 27 provides a ligand contact to substrate. The active-site Nucleophile is the aspartate 80. Asparagine 129 contributes to the substrate binding site. Residues 155 to 303 (GVPNYFGSQR…VEPARRAVLL (149 aa)) enclose the TRUD domain. Phenylalanine 329 serves as a coordination point for substrate.

Belongs to the pseudouridine synthase TruD family.

The enzyme catalyses uridine(13) in tRNA = pseudouridine(13) in tRNA. Functionally, responsible for synthesis of pseudouridine from uracil-13 in transfer RNAs. This Pectobacterium atrosepticum (strain SCRI 1043 / ATCC BAA-672) (Erwinia carotovora subsp. atroseptica) protein is tRNA pseudouridine synthase D.